Here is a 376-residue protein sequence, read N- to C-terminus: tRNA pseudouridine synthase C (376 aa).

Asp168 is an active-site residue.

It in the C-terminal section; belongs to the pseudouridine synthase RluA family. The protein to E.coli YqcC in the N-terminal section.

The enzyme catalyses uridine(65) in tRNA = pseudouridine(65) in tRNA. Responsible for synthesis of pseudouridine from uracil-65 in transfer RNAs. The sequence is that of tRNA pseudouridine synthase C (truC) from Pectobacterium carotovorum subsp. carotovorum (Erwinia carotovora subsp. carotovora).